A 150-amino-acid polypeptide reads, in one-letter code: D-aminoacyl-tRNA deacylase (150 aa).

The short motif at 138-139 (GP) is the Gly-cisPro motif, important for rejection of L-amino acids element.

The protein belongs to the DTD family. In terms of assembly, homodimer.

The protein localises to the cytoplasm. It catalyses the reaction glycyl-tRNA(Ala) + H2O = tRNA(Ala) + glycine + H(+). The catalysed reaction is a D-aminoacyl-tRNA + H2O = a tRNA + a D-alpha-amino acid + H(+). In terms of biological role, an aminoacyl-tRNA editing enzyme that deacylates mischarged D-aminoacyl-tRNAs. Also deacylates mischarged glycyl-tRNA(Ala), protecting cells against glycine mischarging by AlaRS. Acts via tRNA-based rather than protein-based catalysis; rejects L-amino acids rather than detecting D-amino acids in the active site. By recycling D-aminoacyl-tRNA to D-amino acids and free tRNA molecules, this enzyme counteracts the toxicity associated with the formation of D-aminoacyl-tRNA entities in vivo and helps enforce protein L-homochirality. This is D-aminoacyl-tRNA deacylase from Dechloromonas aromatica (strain RCB).